The following is a 315-amino-acid chain: Methionyl-tRNA formyltransferase (315 aa).

111-114 provides a ligand contact to (6S)-5,6,7,8-tetrahydrofolate; that stretch reads SLLP.

The protein belongs to the Fmt family.

It catalyses the reaction L-methionyl-tRNA(fMet) + (6R)-10-formyltetrahydrofolate = N-formyl-L-methionyl-tRNA(fMet) + (6S)-5,6,7,8-tetrahydrofolate + H(+). Its function is as follows. Attaches a formyl group to the free amino group of methionyl-tRNA(fMet). The formyl group appears to play a dual role in the initiator identity of N-formylmethionyl-tRNA by promoting its recognition by IF2 and preventing the misappropriation of this tRNA by the elongation apparatus. The polypeptide is Methionyl-tRNA formyltransferase (Chlorobium phaeobacteroides (strain DSM 266 / SMG 266 / 2430)).